A 268-amino-acid polypeptide reads, in one-letter code: Myeloid leukemia factor 1 (268 aa).

Residues Ser8, Ser32, and Ser34 each carry the phosphoserine modification. 2 disordered regions span residues 44 to 66 and 209 to 268; these read ISDG…SLTH and GRHN…SNKK. Residues 50-125 are interaction with COPS3; the sequence is RAHNRRGHND…IGDEPPKVFQ (76 aa). 2 stretches are compositionally biased toward basic and acidic residues: residues 56-65 and 226-237; these read GHNDGEDSLT and PGSRELKRREKP.

It belongs to the MLF family. In terms of assembly, interacts with CENPU. Also interacts with NRBP1/MADM, YWHAZ/14-3-3-zeta and HNRPUL2/MANP. NRBP1 recruits a serine kinase which phosphorylates both itself and MLF1. Phosphorylated MLF1 then binds to YWHAZ and is retained in the cytoplasm. Retained in the nucleus by binding to HNRPUL2. Binds to COPS3/CSN3 which is required for suppression of COP1 and activation of p53. Post-translationally, phosphorylation is required for binding to YWHAZ. In terms of tissue distribution, most abundant in testis, ovary, skeletal muscle, heart, kidney and colon. Low expression in spleen, thymus and peripheral blood leukocytes.

The protein resides in the cytoplasm. The protein localises to the nucleus. Its subcellular location is the cell projection. It localises to the cilium. It is found in the cytoskeleton. The protein resides in the cilium basal body. Its function is as follows. Involved in lineage commitment of primary hemopoietic progenitors by restricting erythroid formation and enhancing myeloid formation. Interferes with erythropoietin-induced erythroid terminal differentiation by preventing cells from exiting the cell cycle through suppression of CDKN1B/p27Kip1 levels. Suppresses COP1 activity via CSN3 which activates p53 and induces cell cycle arrest. Binds DNA and affects the expression of a number of genes so may function as a transcription factor in the nucleus. The protein is Myeloid leukemia factor 1 (MLF1) of Homo sapiens (Human).